A 168-amino-acid polypeptide reads, in one-letter code: Shikimate kinase (168 aa).

Position 10–15 (10–15) interacts with ATP; sequence GVGKTT. Thr14 provides a ligand contact to Mg(2+). Substrate-binding residues include Asp32, Arg56, and Gly77. Arg115 is an ATP binding site. Arg133 is a substrate binding site.

The protein belongs to the shikimate kinase family. As to quaternary structure, monomer. Mg(2+) is required as a cofactor.

It is found in the cytoplasm. It carries out the reaction shikimate + ATP = 3-phosphoshikimate + ADP + H(+). It functions in the pathway metabolic intermediate biosynthesis; chorismate biosynthesis; chorismate from D-erythrose 4-phosphate and phosphoenolpyruvate: step 5/7. In terms of biological role, catalyzes the specific phosphorylation of the 3-hydroxyl group of shikimic acid using ATP as a cosubstrate. This Macrococcus caseolyticus (strain JCSC5402) (Macrococcoides caseolyticum) protein is Shikimate kinase.